A 100-amino-acid chain; its full sequence is uncharacterized protein (100 aa).

This sequence belongs to the csb family.

This is an uncharacterized protein from Dictyostelium discoideum (Social amoeba).